We begin with the raw amino-acid sequence, 337 residues long: UDP-3-O-acylglucosamine N-acyltransferase (337 aa).

Catalysis depends on His238, which acts as the Proton acceptor.

This sequence belongs to the transferase hexapeptide repeat family. LpxD subfamily. In terms of assembly, homotrimer.

The enzyme catalyses a UDP-3-O-[(3R)-3-hydroxyacyl]-alpha-D-glucosamine + a (3R)-hydroxyacyl-[ACP] = a UDP-2-N,3-O-bis[(3R)-3-hydroxyacyl]-alpha-D-glucosamine + holo-[ACP] + H(+). The protein operates within bacterial outer membrane biogenesis; LPS lipid A biosynthesis. Functionally, catalyzes the N-acylation of UDP-3-O-acylglucosamine using 3-hydroxyacyl-ACP as the acyl donor. Is involved in the biosynthesis of lipid A, a phosphorylated glycolipid that anchors the lipopolysaccharide to the outer membrane of the cell. The sequence is that of UDP-3-O-acylglucosamine N-acyltransferase from Xanthomonas campestris pv. campestris (strain 8004).